Consider the following 903-residue polypeptide: Protein translocase subunit SecA (903 aa).

Residues glutamine 89, 107-111 (GEGKT), and aspartate 502 contribute to the ATP site. The Zn(2+) site is built by cysteine 886, cysteine 888, cysteine 897, and histidine 898.

Belongs to the SecA family. As to quaternary structure, monomer and homodimer. Part of the essential Sec protein translocation apparatus which comprises SecA, SecYEG and auxiliary proteins SecDF-YajC and YidC. It depends on Zn(2+) as a cofactor.

Its subcellular location is the cell inner membrane. The protein resides in the cytoplasm. The catalysed reaction is ATP + H2O + cellular proteinSide 1 = ADP + phosphate + cellular proteinSide 2.. In terms of biological role, part of the Sec protein translocase complex. Interacts with the SecYEG preprotein conducting channel. Has a central role in coupling the hydrolysis of ATP to the transfer of proteins into and across the cell membrane, serving both as a receptor for the preprotein-SecB complex and as an ATP-driven molecular motor driving the stepwise translocation of polypeptide chains across the membrane. The chain is Protein translocase subunit SecA from Rhizobium meliloti (strain 1021) (Ensifer meliloti).